Reading from the N-terminus, the 468-residue chain is Probable Xaa-Pro aminopeptidase PEPP (468 aa).

Mn(2+) contacts are provided by aspartate 264, aspartate 275, glutamate 398, and glutamate 438.

Belongs to the peptidase M24B family. Mn(2+) is required as a cofactor.

The enzyme catalyses Release of any N-terminal amino acid, including proline, that is linked to proline, even from a dipeptide or tripeptide.. Its function is as follows. Catalyzes the removal of a penultimate prolyl residue from the N-termini of peptides. The polypeptide is Probable Xaa-Pro aminopeptidase PEPP (PEPP) (Paracoccidioides brasiliensis (strain Pb03)).